A 321-amino-acid polypeptide reads, in one-letter code: Beta-lactamase (321 aa).

The signal sequence occupies residues 1 to 30 (MEKNRKKQIVVLSIALVCIFILVFSLFHKS). The active-site Acyl-ester intermediate is the Ser83. 233-235 (KTG) is a substrate binding site.

The protein belongs to the class-A beta-lactamase family.

The enzyme catalyses a beta-lactam + H2O = a substituted beta-amino acid. Its activity is regulated as follows. Inhibited by clavulanic acid. Functionally, can hydrolyze cephalosporins, penicillins and also cefoxitin; but at a slow rate. The protein is Beta-lactamase (cfxA) of Phocaeicola vulgatus (Bacteroides vulgatus).